Reading from the N-terminus, the 189-residue chain is Peptidyl-tRNA hydrolase (189 aa).

Position 15 (tyrosine 15) interacts with tRNA. Residue histidine 20 is the Proton acceptor of the active site. The tRNA site is built by phenylalanine 66, asparagine 68, and asparagine 114.

It belongs to the PTH family. In terms of assembly, monomer.

The protein resides in the cytoplasm. It catalyses the reaction an N-acyl-L-alpha-aminoacyl-tRNA + H2O = an N-acyl-L-amino acid + a tRNA + H(+). Hydrolyzes ribosome-free peptidyl-tRNAs (with 1 or more amino acids incorporated), which drop off the ribosome during protein synthesis, or as a result of ribosome stalling. In terms of biological role, catalyzes the release of premature peptidyl moieties from peptidyl-tRNA molecules trapped in stalled 50S ribosomal subunits, and thus maintains levels of free tRNAs and 50S ribosomes. This Streptococcus thermophilus (strain CNRZ 1066) protein is Peptidyl-tRNA hydrolase.